Consider the following 411-residue polypeptide: MSDRDIRCSFCGRTQKEVKKLIAGPGVYICDECVKLAYDIIEEDEEEDVTEEFEDFVLPKPHEIKNFLDQYVIGQERAKKILSVAVYNHYKRIFMKSKITEDVEIQKSNILLIGPTGVGKTLLAETLAKFLKVPFAIADATTLTEAGYVGEDVENILLRLIQNADWDIKRAEKGIVYIDEIDKISRKSENPSITRDVSGEGVQQALLRIVEGTIANVPPQGGRKHPYQEFIQINTKDILFIAGGSFEGIEKIVEKRLDVSSIGFGAQIEPKNRKSLTQILNHIIPEDLIKFGMIPEFVGRFPVVAVLEPLSEEALLKILTEPKNALVKQYKALLSIEGVEIDFTDEALRSIVKEALEKATGARGLRAVMEELMLDLMYELPNLGIKRFTITPELVYNRGKISQELLKKLAG.

Positions 1-49 (MSDRDIRCSFCGRTQKEVKKLIAGPGVYICDECVKLAYDIIEEDEEEDV) constitute a ClpX-type ZB domain. Positions 8, 11, 30, and 33 each coordinate Zn(2+). 115-122 (PTGVGKTL) contacts ATP.

This sequence belongs to the ClpX chaperone family. Component of the ClpX-ClpP complex. Forms a hexameric ring that, in the presence of ATP, binds to fourteen ClpP subunits assembled into a disk-like structure with a central cavity, resembling the structure of eukaryotic proteasomes.

ATP-dependent specificity component of the Clp protease. It directs the protease to specific substrates. Can perform chaperone functions in the absence of ClpP. The protein is ATP-dependent Clp protease ATP-binding subunit ClpX of Dictyoglomus thermophilum (strain ATCC 35947 / DSM 3960 / H-6-12).